The sequence spans 72 residues: Exodeoxyribonuclease 7 small subunit (72 aa).

It belongs to the XseB family. As to quaternary structure, heterooligomer composed of large and small subunits.

Its subcellular location is the cytoplasm. It catalyses the reaction Exonucleolytic cleavage in either 5'- to 3'- or 3'- to 5'-direction to yield nucleoside 5'-phosphates.. Bidirectionally degrades single-stranded DNA into large acid-insoluble oligonucleotides, which are then degraded further into small acid-soluble oligonucleotides. This chain is Exodeoxyribonuclease 7 small subunit, found in Ruegeria pomeroyi (strain ATCC 700808 / DSM 15171 / DSS-3) (Silicibacter pomeroyi).